The primary structure comprises 125 residues: Fluoride-specific ion channel FluC (125 aa).

The next 4 helical transmembrane spans lie at 4–24, 36–56, 68–88, and 100–120; these read PLLAVMIGGCAGCVIRWLLAV, GTLLVNLVGGLIIGATVAWFA, LITTGLCGGMTTFSTFSLEVV, and VISVLTHVTGSLLMTIAGFWL. 2 residues coordinate Na(+): Gly-75 and Thr-78.

It belongs to the fluoride channel Fluc/FEX (TC 1.A.43) family.

The protein resides in the cell inner membrane. The enzyme catalyses fluoride(in) = fluoride(out). With respect to regulation, na(+) is not transported, but it plays an essential structural role and its presence is essential for fluoride channel function. Fluoride-specific ion channel. Important for reducing fluoride concentration in the cell, thus reducing its toxicity. The sequence is that of Fluoride-specific ion channel FluC from Erwinia tasmaniensis (strain DSM 17950 / CFBP 7177 / CIP 109463 / NCPPB 4357 / Et1/99).